The primary structure comprises 253 residues: 3-deoxy-manno-octulosonate cytidylyltransferase (253 aa).

Belongs to the KdsB family.

Its subcellular location is the cytoplasm. It carries out the reaction 3-deoxy-alpha-D-manno-oct-2-ulosonate + CTP = CMP-3-deoxy-beta-D-manno-octulosonate + diphosphate. It participates in nucleotide-sugar biosynthesis; CMP-3-deoxy-D-manno-octulosonate biosynthesis; CMP-3-deoxy-D-manno-octulosonate from 3-deoxy-D-manno-octulosonate and CTP: step 1/1. It functions in the pathway bacterial outer membrane biogenesis; lipopolysaccharide biosynthesis. Its function is as follows. Activates KDO (a required 8-carbon sugar) for incorporation into bacterial lipopolysaccharide in Gram-negative bacteria. This Neisseria meningitidis serogroup C (strain 053442) protein is 3-deoxy-manno-octulosonate cytidylyltransferase.